The following is a 188-amino-acid chain: Photosystem I assembly protein Ycf4 (188 aa).

The next 2 helical transmembrane spans lie at 26 to 46 (YFWA…GLSS) and 70 to 90 (LLFY…SLLW).

This sequence belongs to the Ycf4 family.

The protein localises to the cellular thylakoid membrane. Functionally, seems to be required for the assembly of the photosystem I complex. This is Photosystem I assembly protein Ycf4 from Microcystis aeruginosa (strain NIES-843 / IAM M-2473).